The primary structure comprises 334 residues: MLTYAQAGVDEEKTARALREIIRTARETFKLRKGKVGEPGDIGHYAALLDFGNFYLAMTTDGVGTKVLVAEAVGKFDTIGIDMIAMNVNDLLCVGAEPLALVDYFAVKEPNEEVFKQVAKGLYKGAEEAGVAIVGGETAVMPDLINGYDLAGTAIGIVEKGKVITGERIRPGDSVIGISSSGIHSNGLTLARKLLIPKYGLDYEYEGRKLWEWLLEPTRIYVRPILELINSVEVHGLAHITGGGLLNLKRLTNYGFELEMPPIEGIFKLIHENGVPLDEMFRVFNMGVGFIVVVPQEEKEEALEILSRHYKSYELGNVTRELGKIKVKNYGITL.

The protein belongs to the AIR synthase family.

The protein resides in the cytoplasm. It carries out the reaction 2-formamido-N(1)-(5-O-phospho-beta-D-ribosyl)acetamidine + ATP = 5-amino-1-(5-phospho-beta-D-ribosyl)imidazole + ADP + phosphate + H(+). It participates in purine metabolism; IMP biosynthesis via de novo pathway; 5-amino-1-(5-phospho-D-ribosyl)imidazole from N(2)-formyl-N(1)-(5-phospho-D-ribosyl)glycinamide: step 2/2. The sequence is that of Phosphoribosylformylglycinamidine cyclo-ligase from Pyrococcus abyssi (strain GE5 / Orsay).